Reading from the N-terminus, the 244-residue chain is Probable transcriptional regulatory protein XF_1906 (244 aa).

This sequence belongs to the TACO1 family.

Its subcellular location is the cytoplasm. This chain is Probable transcriptional regulatory protein XF_1906, found in Xylella fastidiosa (strain 9a5c).